The following is a 698-amino-acid chain: Capon-like protein (698 aa).

Positions 25-194 (FFHGITFQAK…SELLDVEQIS (170 aa)) constitute a PID domain. Residues 191 to 240 (EQISEQQLSEDGERGGGDNETPKKEHLAITPDLNHTQPQRPNHLDIMPSH) form a disordered region. Residues 201–217 (DGERGGGDNETPKKEHL) show a composition bias toward basic and acidic residues. Coiled coils occupy residues 265–327 (RSEI…LASL), 379–484 (NQQL…LNAN), and 554–583 (LNED…GNLA). Positions 396 to 423 (SQHLQNLQQQQQQQQQQQQQQTQAAPTA) are enriched in low complexity. The segment at 396 to 460 (SQHLQNLQQQ…QQQQQQQQDA (65 aa)) is disordered. Polar residues predominate over residues 436-447 (YPSMSALQSISN). The segment covering 448–458 (QLQQQQQQQQQ) has biased composition (low complexity). A disordered region spans residues 588–698 (GGSTSTRDTS…RTTWARHTTK (111 aa)). Low complexity predominate over residues 590-640 (STSTRDTSRSSSTLDSPSSPRLRSSNNNISPGSSNGNQNHNNNSNSNSSSS). Composition is skewed to polar residues over residues 662-672 (LSATPSFITRS) and 679-698 (NRSQ…HTTK).

Expressed at higher level in wing imaginal disk.

Putative adapter protein. In Drosophila melanogaster (Fruit fly), this protein is Capon-like protein.